We begin with the raw amino-acid sequence, 596 residues long: M-phase inducer phosphatase (596 aa).

A phosphoserine mark is found at S99 and S178. Residues 174-221 (LSSSSFDSYLRPNVSRSRSSGNAPPFLRSRSSSSYSINKKKGTSGGQA) form a disordered region. In terms of domain architecture, Rhodanese spans 429–533 (IFDKCIIIDC…FYENHKNRCD (105 aa)). The active-site Phosphocysteine intermediate is the C480.

It belongs to the MPI phosphatase family. Interacts with rad24 during G2 in a srk1-dependent manner; the interaction is increased during osmostress. Phosphorylated by srk1 in the N-terminus; phosphorylation promotes nuclear exclusion.

It localises to the cytoplasm. The protein resides in the nucleus. The catalysed reaction is O-phospho-L-tyrosyl-[protein] + H2O = L-tyrosyl-[protein] + phosphate. Tyrosine protein phosphatase which functions as a dosage-dependent inducer of mitotic and meiotic progression. Directly dephosphorylates cdc2 and stimulates its kinase activity. Required for the G2/M transition of the cell cycle. Required for induction of meiosis II. The sequence is that of M-phase inducer phosphatase from Schizosaccharomyces pombe (strain 972 / ATCC 24843) (Fission yeast).